A 298-amino-acid chain; its full sequence is N-acetylmuramic acid 6-phosphate etherase (298 aa).

The region spanning Ile-55–Lys-218 is the SIS domain. The active-site Proton donor is Glu-83. Glu-114 is a catalytic residue.

Belongs to the GCKR-like family. MurNAc-6-P etherase subfamily. In terms of assembly, homodimer.

It catalyses the reaction N-acetyl-D-muramate 6-phosphate + H2O = N-acetyl-D-glucosamine 6-phosphate + (R)-lactate. It participates in amino-sugar metabolism; 1,6-anhydro-N-acetylmuramate degradation. Its pathway is amino-sugar metabolism; N-acetylmuramate degradation. The protein operates within cell wall biogenesis; peptidoglycan recycling. Specifically catalyzes the cleavage of the D-lactyl ether substituent of MurNAc 6-phosphate, producing GlcNAc 6-phosphate and D-lactate. Together with AnmK, is also required for the utilization of anhydro-N-acetylmuramic acid (anhMurNAc) either imported from the medium or derived from its own cell wall murein, and thus plays a role in cell wall recycling. The polypeptide is N-acetylmuramic acid 6-phosphate etherase (Escherichia coli (strain SMS-3-5 / SECEC)).